Consider the following 341-residue polypeptide: Mitochondrial dimethyladenosine transferase 1 (341 aa).

The N-terminal 27 residues, methionine 1–leucine 27, are a transit peptide targeting the mitochondrion. Leucine 38, glycine 63, glutamate 85, lysine 86, aspartate 111, valine 112, and asparagine 141 together coordinate S-adenosyl-L-methionine.

This sequence belongs to the class I-like SAM-binding methyltransferase superfamily. rRNA adenine N(6)-methyltransferase family. KsgA subfamily. In terms of assembly, interacts with mitochondrial RNA polymerase POLRMT. Interacts with TFAM. Bound to the maturing mtSSU until the late stages of assembly.

Its subcellular location is the mitochondrion. It carries out the reaction adenosine(N)/adenosine(N+1) in rRNA + 4 S-adenosyl-L-methionine = N(6)-dimethyladenosine(N)/N(6)-dimethyladenosine(N+1) in rRNA + 4 S-adenosyl-L-homocysteine + 4 H(+). Mitochondrial methyltransferase which uses S-adenosyl methionine to dimethylate two highly conserved adjacent adenosine residues (A1583 and A1584) within the loop of helix 45 at the 3-prime end of 12S rRNA, thereby regulating the assembly or stability of the small subunit of the mitochondrial ribosome. Also required for basal transcription of mitochondrial DNA, probably via its interaction with POLRMT and TFAM. Stimulates transcription independently of the methyltransferase activity. The sequence is that of Mitochondrial dimethyladenosine transferase 1 (TFB1M) from Bos taurus (Bovine).